A 665-amino-acid polypeptide reads, in one-letter code: Phenol hydroxylase (665 aa).

FAD contacts are provided by residues 18–19 (PA), 43–45 (DKR), 51–56 (NGQADG), Q118, Y290, D358, and 368–372 (GQGMN). D55 contributes to the substrate binding site. Position 290 (Y290) interacts with substrate.

Belongs to the PheA/TfdB FAD monooxygenase family. In terms of assembly, homodimer. FAD is required as a cofactor.

The catalysed reaction is phenol + NADPH + O2 + H(+) = catechol + NADP(+) + H2O. It functions in the pathway aromatic compound metabolism; phenol degradation. Its activity is regulated as follows. Inhibited by excess phenol. Heavy metals such AsCuSO(4), AgNO(3), or HgCl(2) severely inhibit activity. In terms of biological role, hydroxylates phenol to catechol. Phenol is the best substrate, but the enzyme also accepts isomeric diphenols, hydroxyl-, amino-, halogen- or methyl-substituted phenols and, to a lesser degree, cresols. This is Phenol hydroxylase from Cutaneotrichosporon cutaneum (Yeast).